A 275-amino-acid chain; its full sequence is MLKAAGIGVRLAGRWLLEQVNLEALPGEVLAVVGPNGAGKSTLLKTLAGEIRPTRGSVSMAGKALADWPARERACVRAVLPQNSTLAFAFRVFEVVLMGRTPHSRGLEGERDRQIAREAMAAAGVAHLAERLYPTLSGGEKQRVQLARVLAQIWEAPPDSPRYLLLDEPTASLDLTHQHSTLAVARNFAHRGAAVVTVLHDLNLAAQYADRLALLKDGKLLVVGVPDIVLTPEWIETGFGLQTLVMRHPRLGCPLVIPLGSASVLQPGEQLAHGK.

The ABC transporter domain occupies 2-242; sequence LKAAGIGVRL…EWIETGFGLQ (241 aa). 34-41 provides a ligand contact to ATP; the sequence is GPNGAGKS.

Belongs to the ABC transporter superfamily. Heme (hemin) importer (TC 3.A.1.14.5) family. In terms of assembly, the complex is composed of two ATP-binding proteins (HmuV), two transmembrane proteins (HmuU) and a solute-binding protein (HmuT).

It is found in the cell inner membrane. Part of the ABC transporter complex HmuTUV involved in hemin import. Responsible for energy coupling to the transport system. The polypeptide is Hemin import ATP-binding protein HmuV (Gloeobacter violaceus (strain ATCC 29082 / PCC 7421)).